We begin with the raw amino-acid sequence, 91 residues long: Acylphosphatase (91 aa).

Residues Cys5–Leu91 form the Acylphosphatase-like domain. Residues Arg20 and Asn38 contribute to the active site.

Belongs to the acylphosphatase family.

The enzyme catalyses an acyl phosphate + H2O = a carboxylate + phosphate + H(+). In Vibrio cholerae serotype O1 (strain ATCC 39315 / El Tor Inaba N16961), this protein is Acylphosphatase (acyP).